The chain runs to 459 residues: Bifunctional protein GlmU (459 aa).

The interval 1–229 is pyrophosphorylase; the sequence is MSNFAIILAA…FDESLGVNDR (229 aa). UDP-N-acetyl-alpha-D-glucosamine is bound by residues 8 to 11, lysine 22, glutamine 72, and 77 to 78; these read LAAG and GT. Aspartate 102 is a Mg(2+) binding site. Residues glycine 139, glutamate 154, asparagine 169, and asparagine 227 each contribute to the UDP-N-acetyl-alpha-D-glucosamine site. Asparagine 227 lines the Mg(2+) pocket. A linker region spans residues 230–250; that stretch reads VALATAESVMRRRINHKHMVN. The segment at 251–459 is N-acetyltransferase; the sequence is GVSFVNPEAT…TRLPHHPKNQ (209 aa). Residues arginine 332 and lysine 350 each contribute to the UDP-N-acetyl-alpha-D-glucosamine site. Histidine 362 serves as the catalytic Proton acceptor. The UDP-N-acetyl-alpha-D-glucosamine site is built by tyrosine 365 and asparagine 376. Residues alanine 379, 385–386, serine 404, alanine 422, and arginine 439 each bind acetyl-CoA; that span reads NY.

This sequence in the N-terminal section; belongs to the N-acetylglucosamine-1-phosphate uridyltransferase family. It in the C-terminal section; belongs to the transferase hexapeptide repeat family. As to quaternary structure, homotrimer. Requires Mg(2+) as cofactor.

Its subcellular location is the cytoplasm. It catalyses the reaction alpha-D-glucosamine 1-phosphate + acetyl-CoA = N-acetyl-alpha-D-glucosamine 1-phosphate + CoA + H(+). The enzyme catalyses N-acetyl-alpha-D-glucosamine 1-phosphate + UTP + H(+) = UDP-N-acetyl-alpha-D-glucosamine + diphosphate. It participates in nucleotide-sugar biosynthesis; UDP-N-acetyl-alpha-D-glucosamine biosynthesis; N-acetyl-alpha-D-glucosamine 1-phosphate from alpha-D-glucosamine 6-phosphate (route II): step 2/2. Its pathway is nucleotide-sugar biosynthesis; UDP-N-acetyl-alpha-D-glucosamine biosynthesis; UDP-N-acetyl-alpha-D-glucosamine from N-acetyl-alpha-D-glucosamine 1-phosphate: step 1/1. It functions in the pathway bacterial outer membrane biogenesis; LPS lipid A biosynthesis. Functionally, catalyzes the last two sequential reactions in the de novo biosynthetic pathway for UDP-N-acetylglucosamine (UDP-GlcNAc). The C-terminal domain catalyzes the transfer of acetyl group from acetyl coenzyme A to glucosamine-1-phosphate (GlcN-1-P) to produce N-acetylglucosamine-1-phosphate (GlcNAc-1-P), which is converted into UDP-GlcNAc by the transfer of uridine 5-monophosphate (from uridine 5-triphosphate), a reaction catalyzed by the N-terminal domain. This chain is Bifunctional protein GlmU, found in Streptococcus pneumoniae serotype 2 (strain D39 / NCTC 7466).